Consider the following 186-residue polypeptide: Probable nicotinate-nucleotide adenylyltransferase (186 aa).

The protein belongs to the NadD family.

It carries out the reaction nicotinate beta-D-ribonucleotide + ATP + H(+) = deamido-NAD(+) + diphosphate. It participates in cofactor biosynthesis; NAD(+) biosynthesis; deamido-NAD(+) from nicotinate D-ribonucleotide: step 1/1. In terms of biological role, catalyzes the reversible adenylation of nicotinate mononucleotide (NaMN) to nicotinic acid adenine dinucleotide (NaAD). This Tropheryma whipplei (strain TW08/27) (Whipple's bacillus) protein is Probable nicotinate-nucleotide adenylyltransferase.